The following is a 343-amino-acid chain: UPF0324 membrane protein LJ_1117 (343 aa).

10 helical membrane passes run 10 to 27 (FGLA…GIFL), 32 to 54 (YVNL…VLPV), 64 to 86 (IGFI…LNLT), 91 to 113 (AGIK…TYWL), 123 to 145 (LAVL…VSPQ), 157 to 179 (NEVL…EIVI), 219 to 241 (ALIM…GYWY), 262 to 284 (IPWF…FPPV), 288 to 310 (GLVQ…SVNF), and 317 to 339 (GGTV…IIMS).

The protein belongs to the UPF0324 family.

It localises to the cell membrane. This Lactobacillus johnsonii (strain CNCM I-12250 / La1 / NCC 533) protein is UPF0324 membrane protein LJ_1117.